The primary structure comprises 309 residues: Protein FdhE (309 aa).

It belongs to the FdhE family.

The protein localises to the cytoplasm. Functionally, necessary for formate dehydrogenase activity. The chain is Protein FdhE from Salmonella enteritidis PT4 (strain P125109).